Reading from the N-terminus, the 178-residue chain is Female-specific protein transformer (178 aa).

Composition is skewed to basic and acidic residues over residues 1–18 (MKMDADSSCGADHRDSHG) and 25–40 (REREQHGRTSNRDSKK). The disordered stretch occupies residues 1–117 (MKMDADSSCG…RRYNPPPKII (117 aa)). Composition is skewed to basic residues over residues 59-73 (RRLRKRSPRSTRRSA) and 81-108 (RRHRHRSRSRNRSRSRSSERRRRQRSPR).

It localises to the nucleus speckle. Its function is as follows. Member of the regulatory pathway controlling female somatic sexual differentiation, regulated by Sxl. Activates dsx female-specific splicing by promoting the formation of a splicing enhancer complex which consists of tra, tra2 and sr proteins. This chain is Female-specific protein transformer (tra), found in Drosophila erecta (Fruit fly).